The sequence spans 207 residues: Alpha/beta-tubulin-N-acetyltransferase 9 (207 aa).

The region spanning Glu-35 to Ser-180 is the N-acetyltransferase domain.

Belongs to the acetyltransferase family. GNAT subfamily.

The enzyme catalyses N-terminal L-methionyl-[tubulin] + acetyl-CoA = N-terminal N(alpha)-acetyl-L-methionyl-[tubulin] + CoA + H(+). In terms of biological role, N-acetyltransferase that mediates the acetylation of the N-terminal residues of alpha- and beta-tubulin. In Homo sapiens (Human), this protein is Alpha/beta-tubulin-N-acetyltransferase 9 (NAT9).